The sequence spans 65 residues: MPKLKTRKAAAKRFKATGTGKFLRRRAFRNHLLDHKSPKLKRHLATKAVVDRTDEDRVALMMPYA.

It belongs to the bacterial ribosomal protein bL35 family.

The chain is Large ribosomal subunit protein bL35 from Synechococcus sp. (strain WH7803).